The chain runs to 110 residues: UPF0122 protein SH1678 (110 aa).

The protein belongs to the UPF0122 family.

Functionally, might take part in the signal recognition particle (SRP) pathway. This is inferred from the conservation of its genetic proximity to ftsY/ffh. May be a regulatory protein. In Staphylococcus haemolyticus (strain JCSC1435), this protein is UPF0122 protein SH1678.